The following is a 274-amino-acid chain: Imidazole glycerol phosphate synthase subunit HisF (274 aa).

Residues aspartate 11 and aspartate 134 contribute to the active site.

This sequence belongs to the HisA/HisF family. In terms of assembly, heterodimer of HisH and HisF.

It localises to the cytoplasm. The catalysed reaction is 5-[(5-phospho-1-deoxy-D-ribulos-1-ylimino)methylamino]-1-(5-phospho-beta-D-ribosyl)imidazole-4-carboxamide + L-glutamine = D-erythro-1-(imidazol-4-yl)glycerol 3-phosphate + 5-amino-1-(5-phospho-beta-D-ribosyl)imidazole-4-carboxamide + L-glutamate + H(+). It participates in amino-acid biosynthesis; L-histidine biosynthesis; L-histidine from 5-phospho-alpha-D-ribose 1-diphosphate: step 5/9. Its function is as follows. IGPS catalyzes the conversion of PRFAR and glutamine to IGP, AICAR and glutamate. The HisF subunit catalyzes the cyclization activity that produces IGP and AICAR from PRFAR using the ammonia provided by the HisH subunit. The sequence is that of Imidazole glycerol phosphate synthase subunit HisF from Methanosphaera stadtmanae (strain ATCC 43021 / DSM 3091 / JCM 11832 / MCB-3).